Consider the following 694-residue polypeptide: uncharacterized protein (694 aa).

Positions 15 to 51 (HKEKMELLDQFDNERKEWESQWKIMQKKIEELCREVK) form a coiled coil. Disordered regions lie at residues 259-286 (LKRNETPPVPPPRSTSRNFPSSDSEQAY), 461-490 (QNHSCSKSSEDLKPCDTSSTHTGSISQSND), and 643-680 (NASHGKGFSRPARPANRRLPSRWASRSPSAPPALRRTT). Polar residues-rich tracts occupy residues 272–283 (STSRNFPSSDSE) and 476–490 (DTSSTHTGSISQSND). A compositionally biased stretch (low complexity) spans 663-677 (SRWASRSPSAPPALR).

This is an uncharacterized protein from Homo sapiens (Human).